A 102-amino-acid polypeptide reads, in one-letter code: NADH-quinone oxidoreductase subunit K (102 aa).

Transmembrane regions (helical) follow at residues 5-25, 31-51, and 66-86; these read IMHY…GIFL, IIIL…FVAF, and FILT…VVFF.

It belongs to the complex I subunit 4L family. As to quaternary structure, NDH-1 is composed of 14 different subunits. Subunits NuoA, H, J, K, L, M, N constitute the membrane sector of the complex.

It is found in the cell inner membrane. It catalyses the reaction a quinone + NADH + 5 H(+)(in) = a quinol + NAD(+) + 4 H(+)(out). Functionally, NDH-1 shuttles electrons from NADH, via FMN and iron-sulfur (Fe-S) centers, to quinones in the respiratory chain. The immediate electron acceptor for the enzyme in this species is believed to be ubiquinone. Couples the redox reaction to proton translocation (for every two electrons transferred, four hydrogen ions are translocated across the cytoplasmic membrane), and thus conserves the redox energy in a proton gradient. This Bartonella henselae (strain ATCC 49882 / DSM 28221 / CCUG 30454 / Houston 1) (Rochalimaea henselae) protein is NADH-quinone oxidoreductase subunit K.